The sequence spans 578 residues: MAYMCADSGNLMAIAQQVIQQQQQQQQQQQRHHHHHHLPPPPPPQSMAPHHHQQKHHHHHQQMPAMPQAPPSSHGQIPGQLAYGGGAAWPAGEHFFADAFGASAGDAVFSDLAAAADFDSDGWMESLIGDAPFQDSDLERLIFTTPPPPVPSPPPTHAAATATATAATAAPRPEAAPALLPQPAAATPVACSSPSPSSADASCSAPILQSLLSCSRAAATDPGLAAAELASVRAAATDAGDPSERLAFYFADALSRRLACGTGAPPSAEPDARFASDELTLCYKTLNDACPYSKFAHLTANQAILEATGAATKIHIVDFGIVQGIQWAALLQALATRPEGKPTRIRITGVPSPLLGPQPAASLAATNTRLRDFAKLLGVDFEFVPLLRPVHELNKSDFLVEPDEAVAVNFMLQLYHLLGDSDELVRRVLRLAKSLSPAVVTLGEYEVSLNRAGFVDRFANALSYYRSLFESLDVAMTRDSPERVRVERWMFGERIQRAVGPEEGADRTERMAGSSEWQTLMEWCGFEPVPLSNYARSQADLLLWNYDSKYKYSLVELPPAFLSLAWEKRPLLTVSAWR.

The segment covering 18–29 has biased composition (low complexity); that stretch reads VIQQQQQQQQQQ. Disordered stretches follow at residues 18–84 and 146–173; these read VIQQ…LAYG and PPPP…APRP. Basic residues predominate over residues 49–61; the sequence is PHHHQQKHHHHHQ. Over residues 62–74 the composition is skewed to low complexity; that stretch reads QMPAMPQAPPSSH. Residues 146 to 156 show a composition bias toward pro residues; that stretch reads PPPPVPSPPPT. The segment covering 157–173 has biased composition (low complexity); the sequence is HAAATATATAATAAPRP. One can recognise a GRAS domain in the interval 198–578; it reads SADASCSAPI…RPLLTVSAWR (381 aa). The tract at residues 205-264 is leucine repeat I (LRI); the sequence is APILQSLLSCSRAAATDPGLAAAELASVRAAATDAGDPSERLAFYFADALSRRLACGTGA. Positions 283-349 are VHIID; it reads YKTLNDACPY…GKPTRIRITG (67 aa). The short motif at 314–318 is the VHIID element; it reads IHIVD. Positions 365 to 397 are leucine repeat II (LRII); the sequence is ATNTRLRDFAKLLGVDFEFVPLLRPVHELNKSD. Residues 406-497 form a PFYRE region; it reads VAVNFMLQLY…RWMFGERIQR (92 aa). Residues 414-418 carry the LXXLL motif motif; that stretch reads LYHLL. An SAW region spans residues 500-578; the sequence is GPEEGADRTE…RPLLTVSAWR (79 aa).

It belongs to the GRAS family. Homodimer.

It localises to the nucleus. In terms of biological role, probable transcription factor involved in plant development. Involved in environmental abiotic stress resistance. May increase the expression of stress-responsive genes. Binds DNA in vitro. This is SCARECROW-LIKE protein 7 from Oryza sativa subsp. japonica (Rice).